We begin with the raw amino-acid sequence, 118 residues long: UPF0102 protein CMM_1377 (118 aa).

It belongs to the UPF0102 family.

The sequence is that of UPF0102 protein CMM_1377 from Clavibacter michiganensis subsp. michiganensis (strain NCPPB 382).